Here is a 356-residue protein sequence, read N- to C-terminus: Ornithine cyclodeaminase (356 aa).

Residues R53 and K77 each coordinate L-ornithine. NAD(+) is bound by residues T92, R120, 147 to 148 (AQ), D169, T209, 232 to 235 (VGGD), K239, and S300. Residue R120 participates in L-ornithine binding. D235 serves as a coordination point for L-ornithine. The active-site Proton donor/acceptor is D235. V301 is an L-ornithine binding site.

It belongs to the ornithine cyclodeaminase/mu-crystallin family. Requires NAD(+) as cofactor.

It carries out the reaction L-ornithine = L-proline + NH4(+). Its pathway is amino-acid biosynthesis; L-proline biosynthesis; L-proline from L-ornithine: step 1/1. Is inhibited by L-proline and L-lysine. Is not activated by small concentrations of L-arginine, and is even inhibited by about 50% at 0.5 mM L-arginine. Functionally, catalyzes the conversion of L-ornithine into L-proline with release of ammonia. Is involved in the utilization of octopine, a catabolic pathway that proceeds through L-arginine and L-ornithine to L-proline. Octopine is a predominant opine in plant cells transformed with Ti plasmid pTiAch5. This chain is Ornithine cyclodeaminase, found in Agrobacterium tumefaciens (strain Ach5).